We begin with the raw amino-acid sequence, 600 residues long: Na(+)/dicarboxylate cotransporter 3 (600 aa).

Residues 1 to 16 (MAALAALAKKVWSARR) are Cytoplasmic-facing. The chain crosses the membrane as a helical span at residues 17 to 37 (LLVLLLVPLALLPILFALPPK). The Extracellular portion of the chain corresponds to 38–55 (EGRCLYVILLMAVYWCTE). A helical membrane pass occupies residues 56–76 (ALPLSVTALLPIILFPFMGIL). Over 77–82 (PSSKVC) the chain is Cytoplasmic. The helical transmembrane segment at 83-103 (PQYFLDTNFLFLSGLIMASAI) threads the bilayer. The Extracellular portion of the chain corresponds to 104–137 (EERNLHRRIALKVLMLVGVQPARLILGMMVTTSF). The chain crosses the membrane as a helical span at residues 138–158 (LSMWLSNTASTAMMLPIASAI). Over 159–229 (LKSLFGQRDT…KEEEHRRNIW (71 aa)) the chain is Cytoplasmic. Residues 230–250 (KGFLISIPYSASIGGTATLTG) form a helical membrane-spanning segment. Residues 251–278 (TAPNLILLGQLKSFFPQCDVVNFGSWFI) are Extracellular-facing. A helical membrane pass occupies residues 279–299 (FAFPLMLLFLLVGWLWISFLY). Residues 300 to 336 (GGMSWRGWRKKNSKLQDVAEDKAKAVIQEEFQNLGPI) lie on the Cytoplasmic side of the membrane. A helical membrane pass occupies residues 337-357 (KFAEQAVFILFCLFAILLFSR). Residues 358 to 372 (DPKFIPGWASLFAPG) are Extracellular-facing. A helical transmembrane segment spans residues 373 to 393 (FVSDAVTGVAIVTILFFFPSQ). Residues 394 to 422 (KPSLKWWFDFKAPNSETEPLLSWKKAQET) are Cytoplasmic-facing. The segment at residues 423-443 (VPWNIILLLGGGFAMAKGCEE) is an intramembrane region (helical). Residues 444–461 (SGLSAWIGGQLHPLEHVP) lie on the Cytoplasmic side of the membrane. The helical transmembrane segment at 462 to 482 (PLLAVLLITVVIAFFTEFASN) threads the bilayer. The Extracellular segment spans residues 483-505 (TATIIIFLPVLAELAIRLHVHPL). The helical transmembrane segment at 506 to 526 (YLMIPGTVSCSYAFMLPVSTP) threads the bilayer. Topologically, residues 527 to 546 (PNSIAFSTGHLLVKDMVRTG) are cytoplasmic. Residues 547-567 (LLMNLMGVLLLSLAMNTWAQA) traverse the membrane as a helical segment. The Extracellular segment spans residues 568–600 (IFQLGTFPDWANTHAANVTALPPALTNNTVQTL). N-linked (GlcNAc...) asparagine glycosylation is found at N584 and N594.

It belongs to the SLC13A/DASS transporter (TC 2.A.47) family. NADC subfamily. In terms of tissue distribution, highly expressed in proximal parts of straight tubules in the kidney. Detected in placenta, in brain, and in liver. Strongly expressed within the meningeal layers of supporting tissue that surround the brain and relatively weakly expressed throughout the cerebral cortex, hippocampus, and cerebellum.

The protein resides in the cell membrane. The catalysed reaction is succinate(out) + 3 Na(+)(out) = succinate(in) + 3 Na(+)(in). It catalyses the reaction 2-oxoglutarate(out) + 3 Na(+)(out) = 2-oxoglutarate(in) + 3 Na(+)(in). It carries out the reaction N-acetyl-L-aspartate(out) + 3 Na(+)(out) = N-acetyl-L-aspartate(in) + 3 Na(+)(in). The enzyme catalyses glutarate(out) + 3 Na(+)(out) = glutarate(in) + 3 Na(+)(in). The catalysed reaction is fumarate(out) + 3 Na(+)(out) = fumarate(in) + 3 Na(+)(in). It catalyses the reaction malate(out) + 3 Na(+)(out) = malate(in) + 3 Na(+)(in). It carries out the reaction 2,2-dimethylsuccinate(out) + 3 Na(+)(out) = 2,2-dimethylsuccinate(in) + 3 Na(+)(in). The enzyme catalyses 2,3-dimethylsuccinate(out) + 3 Na(+)(out) = 2,3-dimethylsuccinate(in) + 3 Na(+)(in). The catalysed reaction is itaconate(out) + 3 Na(+)(out) = itaconate(in) + 3 Na(+)(in). Its activity is regulated as follows. Li(+) decreases succinate transport in the presence of Na(+). Its function is as follows. High-affinity sodium-dicarboxylate cotransporter that accepts a range of substrates with 4-6 carbon atoms, such as the citric acid cycle intermediates succinate and alpha-ketoglutarate (2-oxoglutarate), as well as other compounds including N-acetyl-L-aspartate. Transports the dicarboxylate into the cell with a probable stoichiometry of 3 Na(+) for 1 divalent dicarboxylate, rendering the process electrogenic. Can transport citrate in a Na(+)-dependent manner, recognizing the divalent form of citrate rather than the trivalent form which is normally found in blood. Imports itaconate in hepatocytes leading to activation of TFEB-dependent lysosomal biogenesis involved in antibacterial innate immune response. The polypeptide is Na(+)/dicarboxylate cotransporter 3 (Slc13a3) (Rattus norvegicus (Rat)).